The sequence spans 88 residues: M-zodatoxin-Lt1a (88 aa).

A signal peptide spans 1-22 (MKYFVVALALAVALVCIAESTA). Positions 23–62 (YDVNEELENELDDLSDAAWLAKAAEDLQALDDFEESEESR) are excised as a propeptide. Positions 59-62 (EESR) match the Processing quadruplet motif motif.

In terms of processing, cleavage of the propeptide depends on the processing quadruplet motif (XXXR, with at least one of X being E). As to expression, expressed by the venom gland.

It localises to the secreted. Has antimicrobial activity against Gram-positive bacteria (A.globiformis VKM Ac-1112 (MIC=0.5 uM), and B.subtilis VKM B-501 (MIC=1.0 uM)), Gram-negative bacteria (E.coli DH5-alpha (MIC=1.0 uM), E.coli MH1 (MIC=0.7 uM), and P.aeruginosa PAO1 (MIC=4.1 uM)), and yeasts (P.pastoris GS115 (MIC=17 uM), and S.cerevisiae Y190 (MIC&gt;33 uM)). Has a moderate hemolytic activity against rabbit erythrocytes. Causes paralysis, but is not lethal when injected into insect (M.domestica) larvae. This is M-zodatoxin-Lt1a from Lachesana tarabaevi (Spider).